Consider the following 213-residue polypeptide: MARVRVRQHVNPLSQKFQVVTTWPDWQQVYADCDRPLHLDIGCARGRFLLAMATAQPEWNYLGLEIREPLVDEANAIARERELTNLYYHFSNANLDLEPLLRSLPTGILQRVSIQFPDPWFKKRHQKRRVVQPELVQALATALPAGAEVFLQSDVLEVQAEMCEHFAAEPRFQRTCLDWLPENPLPVPTEREIAVQNKQLPVYRALFIRQPAD.

The S-adenosyl-L-methionine site is built by Asp40, Glu65, Asn92, and Asp118. Asp118 is a catalytic residue. Substrate-binding residues include Lys122 and Asp154.

This sequence belongs to the class I-like SAM-binding methyltransferase superfamily. TrmB family.

It catalyses the reaction guanosine(46) in tRNA + S-adenosyl-L-methionine = N(7)-methylguanosine(46) in tRNA + S-adenosyl-L-homocysteine. It functions in the pathway tRNA modification; N(7)-methylguanine-tRNA biosynthesis. Functionally, catalyzes the formation of N(7)-methylguanine at position 46 (m7G46) in tRNA. This is tRNA (guanine-N(7)-)-methyltransferase from Synechococcus elongatus (strain ATCC 33912 / PCC 7942 / FACHB-805) (Anacystis nidulans R2).